Consider the following 622-residue polypeptide: 1-deoxy-D-xylulose-5-phosphate synthase (622 aa).

Residues His-80 and 121–123 contribute to the thiamine diphosphate site; that span reads GHS. Asp-152 is a Mg(2+) binding site. Residues 153-154, Asn-181, Tyr-288, and Glu-370 each bind thiamine diphosphate; that span reads GA. Asn-181 is a Mg(2+) binding site.

Belongs to the transketolase family. DXPS subfamily. As to quaternary structure, homodimer. The cofactor is Mg(2+). Thiamine diphosphate serves as cofactor.

The enzyme catalyses D-glyceraldehyde 3-phosphate + pyruvate + H(+) = 1-deoxy-D-xylulose 5-phosphate + CO2. It functions in the pathway metabolic intermediate biosynthesis; 1-deoxy-D-xylulose 5-phosphate biosynthesis; 1-deoxy-D-xylulose 5-phosphate from D-glyceraldehyde 3-phosphate and pyruvate: step 1/1. In terms of biological role, catalyzes the acyloin condensation reaction between C atoms 2 and 3 of pyruvate and glyceraldehyde 3-phosphate to yield 1-deoxy-D-xylulose-5-phosphate (DXP). The sequence is that of 1-deoxy-D-xylulose-5-phosphate synthase from Shewanella loihica (strain ATCC BAA-1088 / PV-4).